Here is a 1386-residue protein sequence, read N- to C-terminus: Putative ATP-dependent RNA helicase DHX57 (1386 aa).

Over residues 1–11 (MSSSVRRKGKP) the composition is skewed to basic residues. 2 disordered regions span residues 1–106 (MSSS…MTSE) and 120–147 (EQDA…NDER). Gly residues-rich tracts occupy residues 12-23 (GKGGGKGSSRGG) and 35-50 (GSGG…GGGN). Positions 101–125 (LHMTSENQEKVKALLRDLQEQDADA) form a coiled coil. Residues Ser127 and Ser132 each carry the phosphoserine modification. Residues 133–143 (GEEEDDEPDCC) are compositionally biased toward acidic residues. Positions 180-220 (TVSPFAVQKLSRYGFNTERCQAVLRMCDGDVGASLEHLLTQ) constitute a UBA domain. Residues 299-326 (ENSLEICKFYLKGNCKFGSKCRFKHEVP) form a C3H1-type zinc finger. Ser475, Ser477, and Ser480 each carry phosphoserine. One can recognise a Helicase ATP-binding domain in the interval 554–721 (LNLLRKHQVV…FNSCPVITIP (168 aa)). 567–574 (GMTGCGKT) lines the ATP pocket. Residues 668–671 (DEVH) carry the DEVH box motif. The region spanning 830 to 1010 (LIEALLEWIV…QLCLRIKILE (181 aa)) is the Helicase C-terminal domain.

The protein belongs to the DEAD box helicase family. DEAH subfamily.

It catalyses the reaction ATP + H2O = ADP + phosphate + H(+). In terms of biological role, probable ATP-binding RNA helicase. The sequence is that of Putative ATP-dependent RNA helicase DHX57 (DHX57) from Homo sapiens (Human).